We begin with the raw amino-acid sequence, 168 residues long: G/U mismatch-specific DNA glycosylase (168 aa).

Belongs to the uracil-DNA glycosylase (UDG) superfamily. TDG/mug family. In terms of assembly, binds DNA as a monomer.

The protein resides in the cytoplasm. The enzyme catalyses Specifically hydrolyzes mismatched double-stranded DNA and polynucleotides, releasing free uracil.. Excises ethenocytosine and uracil, which can arise by alkylation or deamination of cytosine, respectively, from the corresponding mispairs with guanine in ds-DNA. It is capable of hydrolyzing the carbon-nitrogen bond between the sugar-phosphate backbone of the DNA and the mispaired base. The complementary strand guanine functions in substrate recognition. Required for DNA damage lesion repair in stationary-phase cells. The sequence is that of G/U mismatch-specific DNA glycosylase from Citrobacter koseri (strain ATCC BAA-895 / CDC 4225-83 / SGSC4696).